The sequence spans 626 residues: Putative folylpolyglutamate synthase (626 aa).

Residue 144 to 147 (GKGS) participates in ATP binding. Mg(2+)-binding residues include serine 168, glutamate 235, and histidine 263. The ATP site is built by arginine 412 and aspartate 430.

This sequence belongs to the folylpolyglutamate synthase family.

It carries out the reaction (6S)-5,6,7,8-tetrahydrofolyl-(gamma-L-Glu)(n) + L-glutamate + ATP = (6S)-5,6,7,8-tetrahydrofolyl-(gamma-L-Glu)(n+1) + ADP + phosphate + H(+). Its pathway is cofactor biosynthesis; tetrahydrofolylpolyglutamate biosynthesis. Its function is as follows. Conversion of folates to polyglutamate derivatives. This Dictyostelium discoideum (Social amoeba) protein is Putative folylpolyglutamate synthase (folC).